Reading from the N-terminus, the 407-residue chain is DNA primase DnaG (407 aa).

A Toprim domain is found at 172–248; it reads DWIIVVEGRA…HIDYVARAPP (77 aa). The Mg(2+) site is built by Glu-178, Asp-222, and Asp-224. The tract at residues 279-304 is disordered; the sequence is AGAEKTEAAAPPPQQPTAPPAAPSQQ. Residues 288–300 show a composition bias toward pro residues; the sequence is APPPQQPTAPPAA.

This sequence belongs to the archaeal DnaG primase family. As to quaternary structure, forms a ternary complex with MCM helicase and DNA. Component of the archaeal exosome complex. Mg(2+) serves as cofactor.

It carries out the reaction ssDNA + n NTP = ssDNA/pppN(pN)n-1 hybrid + (n-1) diphosphate.. Its function is as follows. RNA polymerase that catalyzes the synthesis of short RNA molecules used as primers for DNA polymerase during DNA replication. Also part of the exosome, which is a complex involved in RNA degradation. Acts as a poly(A)-binding protein that enhances the interaction between heteromeric, adenine-rich transcripts and the exosome. In Pyrobaculum calidifontis (strain DSM 21063 / JCM 11548 / VA1), this protein is DNA primase DnaG.